The sequence spans 338 residues: MAEKIAVLGAGSWGSVLANMLTENGHDVTLWSRNEEQVKQLNTEHTNPRYMKDFVYSTNLTATTDMKKAVKGASVVLIVIPTKGLREVAKQLNAILTELHQKPLVIHATKGLEQNTYKRPSEMLSEDISPENRQAIVVLSGPSHAEDVAIKDMTAVTAACEDLASAKKAQKLFSNSYFRVYTNDDVIGAEFGAALKNIIAIGAGAIQGLGYHDNARAALITRGLAEIRRLGVAFGANPMTFIGLSGVGDLVVTATSKNSRNWRAGYQLGQGKKLQDVIDNMGMVIEGVYTTKAAYELSRKRQVQMPITEALYRVLYEGEDIKTAISQLMDRDLTSENE.

NADPH is bound by residues Ser-12, Trp-13, Arg-33, and Lys-110. Sn-glycerol 3-phosphate-binding residues include Lys-110, Gly-141, and Ser-143. Ala-145 serves as a coordination point for NADPH. Positions 196, 249, 259, 260, and 261 each coordinate sn-glycerol 3-phosphate. The active-site Proton acceptor is Lys-196. Arg-260 contributes to the NADPH binding site. NADPH is bound by residues Val-284 and Glu-286.

It belongs to the NAD-dependent glycerol-3-phosphate dehydrogenase family.

It is found in the cytoplasm. The catalysed reaction is sn-glycerol 3-phosphate + NAD(+) = dihydroxyacetone phosphate + NADH + H(+). The enzyme catalyses sn-glycerol 3-phosphate + NADP(+) = dihydroxyacetone phosphate + NADPH + H(+). The protein operates within membrane lipid metabolism; glycerophospholipid metabolism. Its function is as follows. Catalyzes the reduction of the glycolytic intermediate dihydroxyacetone phosphate (DHAP) to sn-glycerol 3-phosphate (G3P), the key precursor for phospholipid synthesis. The chain is Glycerol-3-phosphate dehydrogenase [NAD(P)+] from Limosilactobacillus reuteri (strain DSM 20016) (Lactobacillus reuteri).